The chain runs to 136 residues: Protein PsiE (136 aa).

4 helical membrane passes run 15 to 35 (ILQNVLNLGLLTLGLILVLFL), 55 to 75 (YELVEGLVIYFLYFEFIALIV), 82 to 102 (FHFPLRYFVYIGITAIVRLII), and 108 to 128 (PMDVLLYSAAILLLVITLWLC).

It belongs to the PsiE family.

Its subcellular location is the cell inner membrane. The polypeptide is Protein PsiE (Salmonella arizonae (strain ATCC BAA-731 / CDC346-86 / RSK2980)).